Reading from the N-terminus, the 156-residue chain is Small ribosomal subunit protein uS7c (156 aa).

It belongs to the universal ribosomal protein uS7 family. In terms of assembly, part of the 30S ribosomal subunit.

It localises to the plastid. The protein localises to the chloroplast. One of the primary rRNA binding proteins, it binds directly to 16S rRNA where it nucleates assembly of the head domain of the 30S subunit. This Stangeria eriopus (Natal grass cycad) protein is Small ribosomal subunit protein uS7c (rps7).